Consider the following 243-residue polypeptide: tRNA (guanine-N(1)-)-methyltransferase (243 aa).

Residues glycine 108 and 127–132 (LGDFVL) each bind S-adenosyl-L-methionine.

It belongs to the RNA methyltransferase TrmD family. In terms of assembly, homodimer.

The protein resides in the cytoplasm. The enzyme catalyses guanosine(37) in tRNA + S-adenosyl-L-methionine = N(1)-methylguanosine(37) in tRNA + S-adenosyl-L-homocysteine + H(+). Specifically methylates guanosine-37 in various tRNAs. The chain is tRNA (guanine-N(1)-)-methyltransferase from Streptococcus pyogenes serotype M2 (strain MGAS10270).